Consider the following 277-residue polypeptide: S-formylglutathione hydrolase FrmB (277 aa).

Catalysis depends on charge relay system residues Ser-145, Asp-221, and His-254.

The protein belongs to the esterase D family.

It carries out the reaction S-formylglutathione + H2O = formate + glutathione + H(+). Serine hydrolase involved in the detoxification of formaldehyde. Hydrolyzes S-formylglutathione to glutathione and formate. The sequence is that of S-formylglutathione hydrolase FrmB (frmB) from Escherichia coli O157:H7.